We begin with the raw amino-acid sequence, 47 residues long: Delta-ctenitoxin-Pr2d (47 aa).

Intrachain disulfides connect C3/C17, C10/C23, C14/C46, C16/C31, and C25/C29.

As to expression, expressed by the venom gland.

It localises to the secreted. In terms of biological role, blocks voltage-gated sodium channels (Nav). Causes rapid general spastic paralysis and death when injected in mice at dose levels of less than 2 ug per mouse. The chain is Delta-ctenitoxin-Pr2d from Phoneutria reidyi (Brazilian Amazonian armed spider).